Reading from the N-terminus, the 227-residue chain is 2,3-bisphosphoglycerate-dependent phosphoglycerate mutase (227 aa).

Substrate-binding positions include 7–14 (RHGQSEWN), 20–21 (TG), Arg-59, 86–89 (ERHY), Lys-97, 113–114 (RR), and 182–183 (GN). The active-site Tele-phosphohistidine intermediate is His-8. Glu-86 (proton donor/acceptor) is an active-site residue.

Belongs to the phosphoglycerate mutase family. BPG-dependent PGAM subfamily. In terms of assembly, homodimer.

It catalyses the reaction (2R)-2-phosphoglycerate = (2R)-3-phosphoglycerate. It participates in carbohydrate degradation; glycolysis; pyruvate from D-glyceraldehyde 3-phosphate: step 3/5. Its function is as follows. Catalyzes the interconversion of 2-phosphoglycerate and 3-phosphoglycerate. This chain is 2,3-bisphosphoglycerate-dependent phosphoglycerate mutase, found in Neisseria meningitidis serogroup B (strain ATCC BAA-335 / MC58).